The chain runs to 301 residues: uncharacterized protein (301 aa).

The protein belongs to the asfivirus E301R family. As to quaternary structure, interacts with host IRF3.

In terms of biological role, plays a role in the inhibition of host innate immune system by acting as a negatively regulator of type I interferon production. Mechanistically, interacts with and prevents host IRF3 nuclear localization to inhibit its transcriptional activity. This is an uncharacterized protein from African swine fever virus (isolate Warthog/Namibia/Wart80/1980) (ASFV).